Reading from the N-terminus, the 492-residue chain is Glutamyl-tRNA(Gln) amidotransferase subunit A (492 aa).

Residues Lys-84 and Ser-159 each act as charge relay system in the active site. Residue Ser-183 is the Acyl-ester intermediate of the active site.

This sequence belongs to the amidase family. GatA subfamily. As to quaternary structure, heterotrimer of A, B and C subunits.

It carries out the reaction L-glutamyl-tRNA(Gln) + L-glutamine + ATP + H2O = L-glutaminyl-tRNA(Gln) + L-glutamate + ADP + phosphate + H(+). In terms of biological role, allows the formation of correctly charged Gln-tRNA(Gln) through the transamidation of misacylated Glu-tRNA(Gln) in organisms which lack glutaminyl-tRNA synthetase. The reaction takes place in the presence of glutamine and ATP through an activated gamma-phospho-Glu-tRNA(Gln). The chain is Glutamyl-tRNA(Gln) amidotransferase subunit A from Anaeromyxobacter sp. (strain K).